A 141-amino-acid polypeptide reads, in one-letter code: Large ribosomal subunit protein uL14m (141 aa).

A mitochondrion-targeting transit peptide spans 1–19 (MALSLSGLILPKLMQQRAF).

Belongs to the universal ribosomal protein uL14 family. In terms of assembly, component of the mitochondrial ribosome large subunit (39S) which comprises a 16S rRNA and about 50 distinct proteins. Interacts with MALSU1.

It is found in the mitochondrion. Its function is as follows. May form part of 2 intersubunit bridges in the assembled ribosome. Upon binding to MALSU1, intersubunit bridge formation is blocked, preventing ribosome formation and repressing translation. In Danio rerio (Zebrafish), this protein is Large ribosomal subunit protein uL14m (mrpl14).